A 415-amino-acid polypeptide reads, in one-letter code: Serine--tRNA ligase (415 aa).

231–233 serves as a coordination point for L-serine; it reads TAE. 262–264 contacts ATP; sequence RSE. Glu-285 contributes to the L-serine binding site. 349–352 lines the ATP pocket; that stretch reads EISS. Residue Ser-383 coordinates L-serine.

This sequence belongs to the class-II aminoacyl-tRNA synthetase family. Type-1 seryl-tRNA synthetase subfamily. Homodimer. The tRNA molecule binds across the dimer.

It localises to the cytoplasm. It catalyses the reaction tRNA(Ser) + L-serine + ATP = L-seryl-tRNA(Ser) + AMP + diphosphate + H(+). The enzyme catalyses tRNA(Sec) + L-serine + ATP = L-seryl-tRNA(Sec) + AMP + diphosphate + H(+). Its pathway is aminoacyl-tRNA biosynthesis; selenocysteinyl-tRNA(Sec) biosynthesis; L-seryl-tRNA(Sec) from L-serine and tRNA(Sec): step 1/1. Its function is as follows. Catalyzes the attachment of serine to tRNA(Ser). Is also able to aminoacylate tRNA(Sec) with serine, to form the misacylated tRNA L-seryl-tRNA(Sec), which will be further converted into selenocysteinyl-tRNA(Sec). In Helicobacter pylori (strain Shi470), this protein is Serine--tRNA ligase.